Consider the following 409-residue polypeptide: PPE family protein PPE32 (409 aa).

It belongs to the mycobacterial PPE family. In terms of assembly, interacts with host Toll-like receptor 2 (TLR2).

Its subcellular location is the secreted. The protein localises to the cell wall. It localises to the cell surface. Functionally, virulence factor that modulates the production of host cytokines. The protein is PPE family protein PPE32 of Mycobacterium tuberculosis (strain CDC 1551 / Oshkosh).